The chain runs to 295 residues: CCAAT-binding factor complex subunit php4 (295 aa).

Over residues 1–19 the composition is skewed to low complexity; sequence MESSKSPSEVEKSSSASPA. A disordered region spans residues 1-69; it reads MESSKSPSEV…GPTSALSVEE (69 aa). The stretch at 73–111 forms a coiled coil; sequence RVREKQYQDTIGKLQKENNELLEQLEMLQAQLKNSTLDS. Residues 93-100 carry the Nuclear export signal motif; the sequence is LLEQLEML. The disordered stretch occupies residues 108–130; sequence TLDSPKEVEVNSEVVKPDSATTE.

As to quaternary structure, component of tha CCAAT-binding complex composed of at least php2, php3, php4 and php5. Interacts with crm1 and grx4.

Its subcellular location is the cytoplasm. The protein resides in the nucleus. The protein localises to the cytoskeleton. It is found in the spindle pole. Functionally, component of the transcription regulatory CCAAT-binding complex. Required for the reprogramming of the cell for iron use. Down-regulates pcl1, sdh4, and isa1 underlow-iron conditions. In Schizosaccharomyces pombe (strain 972 / ATCC 24843) (Fission yeast), this protein is CCAAT-binding factor complex subunit php4 (php4).